Here is a 217-residue protein sequence, read N- to C-terminus: Cytidylate kinase (217 aa).

9–17 (GPAGSGKTT) is an ATP binding site.

Belongs to the cytidylate kinase family. Type 1 subfamily.

It localises to the cytoplasm. The enzyme catalyses CMP + ATP = CDP + ADP. It catalyses the reaction dCMP + ATP = dCDP + ADP. The polypeptide is Cytidylate kinase (Thermosipho melanesiensis (strain DSM 12029 / CIP 104789 / BI429)).